The chain runs to 387 residues: NifS-like protein (387 aa).

Pyridoxal 5'-phosphate is bound by residues 58 to 59 (SE) and 184 to 186 (SIN).

It belongs to the class-V pyridoxal-phosphate-dependent aminotransferase family. NifS/IscS subfamily. The cofactor is pyridoxal 5'-phosphate.

The protein resides in the virion. The protein is NifS-like protein of African swine fever virus (isolate Tick/South Africa/Pretoriuskop Pr4/1996) (ASFV).